A 629-amino-acid polypeptide reads, in one-letter code: Hemocyanin C chain (629 aa).

The Cu cation site is built by His175, His179, His206, His326, His330, and His366. A glycan (N-linked (GlcNAc...) asparagine) is linked at Asn451. A disulfide bond links Cys537 and Cys585. Asn618 carries N-linked (GlcNAc...) asparagine glycosylation.

Belongs to the tyrosinase family. Hemocyanin subfamily. In terms of assembly, tarantula hemocyanin is a 24-chain polymer with seven different chains identified. In terms of tissue distribution, hemolymph.

It localises to the secreted. The protein resides in the extracellular space. Functionally, hemocyanins are copper-containing oxygen carriers occurring freely dissolved in the hemolymph of many mollusks and arthropods. This chain is Hemocyanin C chain (HCC), found in Aphonopelma sp. (American tarantula).